A 157-amino-acid chain; its full sequence is Small ribosomal subunit protein uS7 (157 aa).

The protein belongs to the universal ribosomal protein uS7 family. Part of the 30S ribosomal subunit. Contacts proteins S9 and S11.

One of the primary rRNA binding proteins, it binds directly to 16S rRNA where it nucleates assembly of the head domain of the 30S subunit. Is located at the subunit interface close to the decoding center, probably blocks exit of the E-site tRNA. The polypeptide is Small ribosomal subunit protein uS7 (Blochmanniella floridana).